The following is a 250-amino-acid chain: 2,3-bisphosphoglycerate-dependent phosphoglycerate mutase (250 aa).

Substrate-binding positions include 12–19, 25–26, arginine 64, 91–94, lysine 102, 118–119, and 185–186; these read RHGQSAWN, TG, ERHY, RR, and GN. The active-site Tele-phosphohistidine intermediate is the histidine 13. Residue glutamate 91 is the Proton donor/acceptor of the active site.

Belongs to the phosphoglycerate mutase family. BPG-dependent PGAM subfamily.

It carries out the reaction (2R)-2-phosphoglycerate = (2R)-3-phosphoglycerate. It participates in carbohydrate degradation; glycolysis; pyruvate from D-glyceraldehyde 3-phosphate: step 3/5. Catalyzes the interconversion of 2-phosphoglycerate and 3-phosphoglycerate. The polypeptide is 2,3-bisphosphoglycerate-dependent phosphoglycerate mutase (Corynebacterium efficiens (strain DSM 44549 / YS-314 / AJ 12310 / JCM 11189 / NBRC 100395)).